A 398-amino-acid chain; its full sequence is Enoyl-[acyl-carrier-protein] reductase [NADH] (398 aa).

NAD(+)-binding positions include 48–53, 74–75, 111–112, and 139–140; these read GSSTGY, FE, DA, and LA. Tyrosine 225 contacts substrate. The active-site Proton donor is tyrosine 235. NAD(+)-binding positions include lysine 244 and 273–275; that span reads VVT.

The protein belongs to the TER reductase family. As to quaternary structure, monomer.

The catalysed reaction is a 2,3-saturated acyl-[ACP] + NAD(+) = a (2E)-enoyl-[ACP] + NADH + H(+). It participates in lipid metabolism; fatty acid biosynthesis. In terms of biological role, involved in the final reduction of the elongation cycle of fatty acid synthesis (FAS II). Catalyzes the reduction of a carbon-carbon double bond in an enoyl moiety that is covalently linked to an acyl carrier protein (ACP). The chain is Enoyl-[acyl-carrier-protein] reductase [NADH] from Pseudomonas aeruginosa (strain UCBPP-PA14).